The sequence spans 319 residues: Thiamine pyrophosphokinase (319 aa).

Ser-2 carries the N-acetylserine modification.

It belongs to the thiamine pyrophosphokinase family. As to quaternary structure, homodimer.

It catalyses the reaction thiamine + ATP = thiamine diphosphate + AMP + H(+). Its pathway is cofactor biosynthesis; thiamine diphosphate biosynthesis; thiamine diphosphate from thiamine: step 1/1. Its function is as follows. Essential protein, it is the only enzyme in yeast capable of synthesizing thiamine pyrophosphate (TPP). The chain is Thiamine pyrophosphokinase from Saccharomyces cerevisiae (strain ATCC 204508 / S288c) (Baker's yeast).